The chain runs to 92 residues: MTIENDYAKLKELMEFPAKMTFKVAGINREGLAQDLIQVVQKYIKGDYIPKEKRSSKGTYNSVSIDIIAENFDQVETLYKELAKVEGVKMVI.

It belongs to the UPF0250 family.

The sequence is that of UPF0250 protein CGSHiEE_03170 from Haemophilus influenzae (strain PittEE).